The chain runs to 669 residues: PDF receptor (669 aa).

The Extracellular segment spans residues 1–244 (MTLLSNILDC…DIARRTRTLE (244 aa)). The disordered stretch occupies residues 24 to 52 (RQSGSSGPSPSAPTAGTFESKSMLEPTSS). The segment covering 26-40 (SGSSGPSPSAPTAGT) has biased composition (low complexity). Residues asparagine 111, asparagine 117, asparagine 130, asparagine 137, asparagine 148, and asparagine 198 are each glycosylated (N-linked (GlcNAc...) asparagine). Residues 245-265 (IVGLCLSLFALIVSLLIFCTF) traverse the membrane as a helical segment. At 266–274 (RSLRNNRTK) the chain is on the cytoplasmic side. The helical transmembrane segment at 275–295 (IHKNLFVAMVLQVIIRLTLYL) threads the bilayer. Over 296–334 (DQFRRGNKEAATNTSLSVIENTPYLCEASYVLLEYARTA) the chain is Extracellular. Asparagine 308 is a glycosylation site (N-linked (GlcNAc...) asparagine). Residues 335–355 (MFMWMFIEGLYLHNMVTVAVF) form a helical membrane-spanning segment. Over 356–366 (QGSFPLKFFSR) the chain is Cytoplasmic. The chain crosses the membrane as a helical span at residues 367 to 387 (LGWCVPILMTTVWARCTVMYM). Residues 388–411 (DTSLGECLWNYNLTPYYWILEGPR) lie on the Extracellular side of the membrane. A helical membrane pass occupies residues 412 to 432 (LAVILLNFCFLVNIIRVLVMK). The Cytoplasmic segment spans residues 433–449 (LRQSQASDIEQTRKAVR). Residues 450-470 (AAIVLLPLLGITNLLHQLAPL) traverse the membrane as a helical segment. The Extracellular segment spans residues 471–480 (KTATNFAVWS). The chain crosses the membrane as a helical span at residues 481-501 (YGTHFLTSFQGFFIALIYCFL). Residues 502–669 (NGEVRAVLLK…ESVVFELSEQ (168 aa)) lie on the Cytoplasmic side of the membrane. Disordered regions lie at residues 536 to 573 (AYNT…KPSS) and 590 to 614 (PRLQ…AEPD). Over residues 595 to 609 (KAREKGKDRVEKTDA) the composition is skewed to basic and acidic residues.

This sequence belongs to the G-protein coupled receptor 2 family. As to expression, mainly present in clock neurons of the brain. Localizes in all 4 s-LNv neurons, 1 LNd neuron, 7 DN1 neurons, and 1 DN3 neuron. In addition to the clock neurons, it is also present in approximately 13 pairs of neurons along the ventral nerve cord in third instar larvae, which do not overlap with dopaminergic or serotonergic neurons. Not present in DN2 neurons (at protein level).

It is found in the cell membrane. Receptor for PDF, a neuropeptide controlling circadian behavioral rhythms. Probably regulates circadian behavioral rhythms through coordination of activities of clock neurons. PDF-binding results in the elevation of cAMP synthesis. Plays a role in sleep regulation and regulates the state transition from sleep to wake. This Drosophila melanogaster (Fruit fly) protein is PDF receptor.